Here is a 312-residue protein sequence, read N- to C-terminus: Glyoxylate/hydroxypyruvate reductase A (312 aa).

The active site involves R227. H275 acts as the Proton donor in catalysis.

The protein belongs to the D-isomer specific 2-hydroxyacid dehydrogenase family. GhrA subfamily.

Its subcellular location is the cytoplasm. The enzyme catalyses glycolate + NADP(+) = glyoxylate + NADPH + H(+). It carries out the reaction (R)-glycerate + NAD(+) = 3-hydroxypyruvate + NADH + H(+). The catalysed reaction is (R)-glycerate + NADP(+) = 3-hydroxypyruvate + NADPH + H(+). In terms of biological role, catalyzes the NADPH-dependent reduction of glyoxylate and hydroxypyruvate into glycolate and glycerate, respectively. The sequence is that of Glyoxylate/hydroxypyruvate reductase A from Escherichia coli O6:K15:H31 (strain 536 / UPEC).